The following is an 859-amino-acid chain: DNA mismatch repair protein MutS (859 aa).

614–621 (GPNMGGKS) lines the ATP pocket.

Belongs to the DNA mismatch repair MutS family.

This protein is involved in the repair of mismatches in DNA. It is possible that it carries out the mismatch recognition step. This protein has a weak ATPase activity. In Histophilus somni (strain 2336) (Haemophilus somnus), this protein is DNA mismatch repair protein MutS.